A 130-amino-acid polypeptide reads, in one-letter code: Small ribosomal subunit protein uS9 (130 aa).

The protein belongs to the universal ribosomal protein uS9 family.

The protein is Small ribosomal subunit protein uS9 of Colwellia psychrerythraea (strain 34H / ATCC BAA-681) (Vibrio psychroerythus).